A 118-amino-acid chain; its full sequence is Large ribosomal subunit protein uL18 (118 aa).

Belongs to the universal ribosomal protein uL18 family. As to quaternary structure, part of the 50S ribosomal subunit; part of the 5S rRNA/L5/L18/L25 subcomplex. Contacts the 5S and 23S rRNAs.

This is one of the proteins that bind and probably mediate the attachment of the 5S RNA into the large ribosomal subunit, where it forms part of the central protuberance. This is Large ribosomal subunit protein uL18 from Zymomonas mobilis subsp. mobilis (strain ATCC 31821 / ZM4 / CP4).